Reading from the N-terminus, the 573-residue chain is ESX-1 secretion system protein EccA1 (573 aa).

334–341 (GPPGTGKT) contacts ATP.

It belongs to the CbxX/CfxQ family. In terms of assembly, part of the ESX-1 / type VII secretion system (T7SS), which is composed of cytosolic and membrane components.

Its subcellular location is the cytoplasm. In terms of biological role, part of the ESX-1 specialized secretion system, which delivers several virulence factors to host cells during infection, including the key virulence factors EsxA (ESAT-6) and EsxB (CFP-10). EccA1 exhibits ATPase activity and may provide energy for the export of ESX-1 substrates. This Mycobacterium tuberculosis (strain CDC 1551 / Oshkosh) protein is ESX-1 secretion system protein EccA1.